The primary structure comprises 119 residues: Holo-[acyl-carrier-protein] synthase (119 aa).

Residues Asp8 and Glu58 each contribute to the Mg(2+) site.

The protein belongs to the P-Pant transferase superfamily. AcpS family. Mg(2+) serves as cofactor.

It is found in the cytoplasm. The enzyme catalyses apo-[ACP] + CoA = holo-[ACP] + adenosine 3',5'-bisphosphate + H(+). Functionally, transfers the 4'-phosphopantetheine moiety from coenzyme A to a Ser of acyl-carrier-protein. The polypeptide is Holo-[acyl-carrier-protein] synthase (Streptococcus suis (strain 05ZYH33)).